A 527-amino-acid polypeptide reads, in one-letter code: Peptide chain release factor 3 (527 aa).

A tr-type G domain is found at 9–278 (DIRRTFAIIS…GLTQWAPKPQ (270 aa)). GTP contacts are provided by residues 18–25 (SHPDAGKT), 86–90 (DTPGH), and 140–143 (NKCD).

The protein belongs to the TRAFAC class translation factor GTPase superfamily. Classic translation factor GTPase family. PrfC subfamily.

It is found in the cytoplasm. Increases the formation of ribosomal termination complexes and stimulates activities of RF-1 and RF-2. It binds guanine nucleotides and has strong preference for UGA stop codons. It may interact directly with the ribosome. The stimulation of RF-1 and RF-2 is significantly reduced by GTP and GDP, but not by GMP. This chain is Peptide chain release factor 3, found in Shewanella denitrificans (strain OS217 / ATCC BAA-1090 / DSM 15013).